Reading from the N-terminus, the 81-residue chain is Putative defensin-like protein 102 (81 aa).

An N-terminal signal peptide occupies residues 1–24 (MTTTMKTFVAFVLTVFFIMSSAHC). 4 disulfide bridges follow: Cys-43–Cys-78, Cys-49–Cys-71, Cys-57–Cys-76, and Cys-61–Cys-77.

Belongs to the DEFL family.

The protein resides in the secreted. This is Putative defensin-like protein 102 from Arabidopsis thaliana (Mouse-ear cress).